The following is a 402-amino-acid chain: N-acetyllactosaminide beta-1,6-N-acetylglucosaminyl-transferase (402 aa).

Residues 1-7 (MMGSWKH) are Cytoplasmic-facing. A helical; Signal-anchor for type II membrane protein membrane pass occupies residues 8 to 23 (CLFSASLISALIFVFV). Residues 24-400 (YNTELWENKR…QSETAIQPSW (377 aa)) are Lumenal-facing. Asn41 carries N-linked (GlcNAc...) asparagine glycosylation.

Belongs to the glycosyltransferase 14 family. As to expression, expressed in lens epithelium cells. Expressed in reticulocytes.

The protein resides in the golgi apparatus membrane. The enzyme catalyses a beta-D-Gal-(1-&gt;4)-beta-D-GlcNAc-(1-&gt;3)-beta-D-Gal-(1-&gt;4)-beta-D-GlcNAc derivative + UDP-N-acetyl-alpha-D-glucosamine = a beta-D-Gal-(1-&gt;4)-beta-D-GlcNAc-(1-&gt;3)-[beta-D-GlcNAc-(1-&gt;6)]-beta-D-Gal-(1-&gt;4)-N-acetyl-beta-D-glucosaminyl derivative + UDP + H(+). It participates in protein modification; protein glycosylation. In terms of biological role, branching enzyme that converts linear into branched poly-N-acetyllactosaminoglycans. Introduces the blood group I antigen during embryonic development. It is closely associated with the development and maturation of erythroid cells. Determines the expression of the blood group I antigen in erythrocytes. The sequence is that of N-acetyllactosaminide beta-1,6-N-acetylglucosaminyl-transferase (GCNT2) from Homo sapiens (Human).